A 469-amino-acid chain; its full sequence is Glutamate--tRNA ligase (469 aa).

The short motif at Pro-9 to Gly-19 is the 'HIGH' region element. Zn(2+) contacts are provided by Cys-98, Cys-100, Cys-125, and Asp-127. The 'KMSKS' region signature appears at Lys-236 to Arg-240. Residue Lys-239 coordinates ATP.

It belongs to the class-I aminoacyl-tRNA synthetase family. Glutamate--tRNA ligase type 1 subfamily. Monomer. Zn(2+) serves as cofactor.

The protein localises to the cytoplasm. The catalysed reaction is tRNA(Glu) + L-glutamate + ATP = L-glutamyl-tRNA(Glu) + AMP + diphosphate. Functionally, catalyzes the attachment of glutamate to tRNA(Glu) in a two-step reaction: glutamate is first activated by ATP to form Glu-AMP and then transferred to the acceptor end of tRNA(Glu). The chain is Glutamate--tRNA ligase from Shewanella sediminis (strain HAW-EB3).